Reading from the N-terminus, the 625-residue chain is Arginine--tRNA ligase (625 aa).

Positions 117–127 match the 'HIGH' region motif; sequence ANPIHPLHIGH.

It belongs to the class-I aminoacyl-tRNA synthetase family.

The protein resides in the cytoplasm. It carries out the reaction tRNA(Arg) + L-arginine + ATP = L-arginyl-tRNA(Arg) + AMP + diphosphate. This Saccharolobus solfataricus (strain ATCC 35092 / DSM 1617 / JCM 11322 / P2) (Sulfolobus solfataricus) protein is Arginine--tRNA ligase.